The sequence spans 312 residues: Olfactory receptor 5J2 (312 aa).

Residues 1–25 (MADDNFTVVTEFILLGLTDHAELKA) lie on the Extracellular side of the membrane. N-linked (GlcNAc...) asparagine glycosylation is present at N5. Residues 26–46 (VLFVVFLVIYAITLLRNLGMI) form a helical membrane-spanning segment. Topologically, residues 47–54 (LLIQITSK) are cytoplasmic. The chain crosses the membrane as a helical span at residues 55–75 (LHTPMYFLLSCLSFVDACYSS). Residues 76 to 99 (AIAPKMLVNLLVVKATISFSACMV) lie on the Extracellular side of the membrane. Cysteines 97 and 189 form a disulfide. The helical transmembrane segment at 100–120 (QHLCFGVFITTEGFLLSVMAY) threads the bilayer. Over 121-139 (DRYVAIVSPLLYTVAMSDR) the chain is Cytoplasmic. Residues 140-160 (KCVELVTGSWIGGIVNTLIHT) traverse the membrane as a helical segment. Topologically, residues 161–196 (ISLRRLSFCRLNAVSHFFCDIPSLLKLSCSDTSMNE) are extracellular. The helical transmembrane segment at 197 to 217 (LLLLTFSGVIAMATFLTVIIS) threads the bilayer. Over 218-237 (YIFIAFASLRIHSASGRQQA) the chain is Cytoplasmic. The chain crosses the membrane as a helical span at residues 238–258 (FSTCASHLTAVTIFYGTLIFS). Residues 259–271 (YIQPSSQYFVEQE) lie on the Extracellular side of the membrane. Residues 272–292 (KVVSMFYTLGIPMLNLLIHSL) form a helical membrane-spanning segment. Residues 293-312 (RNKDVKEAVKRAIEMKHFLC) are Cytoplasmic-facing.

The protein belongs to the G-protein coupled receptor 1 family.

It localises to the cell membrane. Odorant receptor. In Homo sapiens (Human), this protein is Olfactory receptor 5J2 (OR5J2).